The primary structure comprises 379 residues: MTDNIAATIKEKRERLHMTQKEFADALGLSKYGDRTIRRWERGETKPTGAELKAVIDFPDTPPYPNNENGRYRMIDLFAGIGGTRLGFHQTNAVNVVFSSEWDKFAQKTYHANYGDFPDGDITKIDEKDIPDHEILVGGFPCVAFSQAGLKKGFNDTRGTLFFDIARIIKEKKPHAFLLENVKNLLGHDKGRTFSIIKNTLEELNYTVYYNIFAAKDFGVPQNRERIYIVGFNKEKVRNHEHFTFPTPLKTKTRVGDILEKSVDNKYTLSDALWNGHQRRKLVNAAAGKGFGYGLFNENSPYTNTISARYYKDGSEILIEQKGSNPRKITPREASRLQGFPSDFIIPVSDTQAYKQFGNSVAVPVINAIAEKIISTLDS.

The HTH cro/C1-type domain maps to 9-66 (IKEKRERLHMTQKEFADALGLSKYGDRTIRRWERGETKPTGAELKAVIDFPDTPPYPN). One can recognise an SAM-dependent MTase C5-type domain in the interval 72–379 (YRMIDLFAGI…AEKIISTLDS (308 aa)). Residue Cys142 is part of the active site.

It belongs to the class I-like SAM-binding methyltransferase superfamily. C5-methyltransferase family.

The catalysed reaction is a 2'-deoxycytidine in DNA + S-adenosyl-L-methionine = a 5-methyl-2'-deoxycytidine in DNA + S-adenosyl-L-homocysteine + H(+). A methylase that recognizes the double-stranded sequence 5'-CCNGG-3', methylates C-2 on both strands, and protects the DNA from cleavage by the SsoII endonuclease. This is Type II methyltransferase M.SsoII (ssoIIM) from Shigella sonnei.